The chain runs to 218 residues: MGDRENVSYGSRPILAQKMNLLLRGFLLFLIGVFLALVLNLLQVQRNVTLFPPDVLSSLFSSAWWVPLCCGTAAAAIGLLYPCIDRHLGEPHKFKREWSSVMRCVAVFVGINHASAKVDFANNMQLSLTLAALSIGLWWTFDRSRSGLGLGIGISFFATLVSQLLVYNGVYEYTAPDFLYVRSWLPCIFFAGGITMGNIGRQLEMYERKALVEKSHRD.

Residues 1–21 (MGDRENVSYGSRPILAQKMNL) are Cytoplasmic-facing. The helical transmembrane segment at 22–44 (LLRGFLLFLIGVFLALVLNLLQV) threads the bilayer. The Lumenal segment spans residues 45–63 (QRNVTLFPPDVLSSLFSSA). Residues 64–81 (WWVPLCCGTAAAAIGLLY) form a helical membrane-spanning segment. At 82 to 96 (PCIDRHLGEPHKFKR) the chain is on the cytoplasmic side. The chain crosses the membrane as a helical span at residues 97 to 119 (EWSSVMRCVAVFVGINHASAKVD). The Lumenal portion of the chain corresponds to 120-122 (FAN). Residues 123 to 141 (NMQLSLTLAALSIGLWWTF) traverse the membrane as a helical segment. Topologically, residues 142–146 (DRSRS) are cytoplasmic. The chain crosses the membrane as a helical span at residues 147–168 (GLGLGIGISFFATLVSQLLVYN). The Lumenal segment spans residues 169–182 (GVYEYTAPDFLYVR). A helical transmembrane segment spans residues 183-200 (SWLPCIFFAGGITMGNIG). Over 201-218 (RQLEMYERKALVEKSHRD) the chain is Cytoplasmic. Residues 212–218 (VEKSHRD) carry the KxHxx motif.

Belongs to the INSIG family. Interacts with scap; interaction is direct and only takes place in the presence of sterols; it prevents interaction between scap and the coat protein complex II (COPII). Associates with the SCAP-SREBP complex; association is mediated via its interaction with scap and only takes place in the presence of sterols.

It localises to the endoplasmic reticulum membrane. Functionally, oxysterol-binding protein that mediates feedback control of cholesterol synthesis by controlling both endoplasmic reticulum to Golgi transport of scap and degradation of hmgcr. Acts as a negative regulator of cholesterol biosynthesis by mediating the retention of the SCAP-SREBP complex in the endoplasmic reticulum, thereby blocking the processing of sterol regulatory element-binding proteins (SREBPs). Binds oxysterol, including 22-hydroxycholesterol, 24-hydroxycholesterol, 25-hydroxycholesterol and 27-hydroxycholesterol, regulating interaction with scap and retention of the SCAP-SREBP complex in the endoplasmic reticulum. In presence of oxysterol, interacts with scap, retaining the SCAP-SREBP complex in the endoplasmic reticulum, thereby preventing scap from escorting SREBPs to the Golgi. Sterol deprivation reduce oxysterol-binding, disrupting the interaction between insig2 and scap, thereby promoting Golgi transport of the SCAP-SREBP complex, followed by processing and nuclear translocation of SREBPs. Also regulates cholesterol synthesis by regulating degradation of hmgcr. The chain is Insulin-induced gene 2 protein from Xenopus laevis (African clawed frog).